We begin with the raw amino-acid sequence, 363 residues long: MTDKTYKIAVLPGDGIGPEVMAQAHKVLDAIEKKHAIHFEREEHDVGGIAIDNHGCPLPQSTVTACEESDAVLFGSVGGPKWEHLPPNDQPERGALLPLRKHFQLFCNLRPAQIHSGLEAFSPLRADISGRGFDIVVVRELTGGIYFGQPKGREGEGANEKAYDTEIYHRFEIERIAKIAFESARLRRKKVCSIDKANVLQSSILWREVVEELAKDYPDVELSHMYIDNATMQLIKDPAQFDVMLCSNIFGDIISDECAMITGSMGMLPSASLNESKFGLYEPAGGSAPDIAGKNIANPVAQILSAALMLRYSLGEEAAAQDIENAVSQALAAGELTADLAGDKPALSTAEMGDKIAQYILNS.

G79–E92 serves as a coordination point for NAD(+). The substrate site is built by R100, R110, R139, and D228. Mg(2+) is bound by residues D228, D252, and D256. Residue G286–N298 participates in NAD(+) binding.

It belongs to the isocitrate and isopropylmalate dehydrogenases family. LeuB type 1 subfamily. In terms of assembly, homodimer. Requires Mg(2+) as cofactor. Mn(2+) is required as a cofactor.

The protein localises to the cytoplasm. It carries out the reaction (2R,3S)-3-isopropylmalate + NAD(+) = 4-methyl-2-oxopentanoate + CO2 + NADH. Its pathway is amino-acid biosynthesis; L-leucine biosynthesis; L-leucine from 3-methyl-2-oxobutanoate: step 3/4. In terms of biological role, catalyzes the oxidation of 3-carboxy-2-hydroxy-4-methylpentanoate (3-isopropylmalate) to 3-carboxy-4-methyl-2-oxopentanoate. The product decarboxylates to 4-methyl-2 oxopentanoate. The protein is 3-isopropylmalate dehydrogenase of Vibrio vulnificus (strain CMCP6).